The chain runs to 257 residues: UPF0246 protein YaaA (257 aa).

Belongs to the UPF0246 family.

This chain is UPF0246 protein YaaA, found in Salmonella schwarzengrund (strain CVM19633).